We begin with the raw amino-acid sequence, 252 residues long: Hydroxyacylglutathione hydrolase (252 aa).

Positions 54, 56, 58, 59, 111, 130, and 170 each coordinate Zn(2+).

It belongs to the metallo-beta-lactamase superfamily. Glyoxalase II family. In terms of assembly, monomer. Zn(2+) is required as a cofactor.

It carries out the reaction an S-(2-hydroxyacyl)glutathione + H2O = a 2-hydroxy carboxylate + glutathione + H(+). It participates in secondary metabolite metabolism; methylglyoxal degradation; (R)-lactate from methylglyoxal: step 2/2. Its function is as follows. Thiolesterase that catalyzes the hydrolysis of S-D-lactoyl-glutathione to form glutathione and D-lactic acid. The polypeptide is Hydroxyacylglutathione hydrolase (Francisella tularensis subsp. tularensis (strain FSC 198)).